A 120-amino-acid polypeptide reads, in one-letter code: Large ribosomal subunit protein uL18 (120 aa).

The interval Met1 to Gly22 is disordered. The span at Ser8–Gly18 shows a compositional bias: basic residues.

The protein belongs to the universal ribosomal protein uL18 family. As to quaternary structure, part of the 50S ribosomal subunit; part of the 5S rRNA/L5/L18/L25 subcomplex. Contacts the 5S and 23S rRNAs.

This is one of the proteins that bind and probably mediate the attachment of the 5S RNA into the large ribosomal subunit, where it forms part of the central protuberance. The polypeptide is Large ribosomal subunit protein uL18 (Nostoc punctiforme (strain ATCC 29133 / PCC 73102)).